The sequence spans 465 residues: Gamma-aminobutyric acid receptor subunit rho-2 (465 aa).

Positions 1–20 (MPYFTRLILFLFCLMVLVES) are cleaved as a signal peptide. At 21–260 (RKPKRKRWTG…LYINFTLRRH (240 aa)) the chain is on the extracellular side. R105 is a binding site for 4-aminobutanoate. An N-linked (GlcNAc...) asparagine glycan is attached at N120. S169 is a binding site for 4-aminobutanoate. C178 and C192 form a disulfide bridge. E197 provides a ligand contact to 4-aminobutanoate. Residue N254 is glycosylated (N-linked (GlcNAc...) asparagine). Residues 261–281 (IFFFLLQTYFPATLMVMLSWV) traverse the membrane as a helical segment. Topologically, residues 282 to 293 (SFWIDRRAVPAR) are cytoplasmic. A helical transmembrane segment spans residues 294-314 (VSLGITTVLTMTTIITGVNAS). At 315-325 (MPRVSYVKAVD) the chain is on the extracellular side. The chain crosses the membrane as a helical span at residues 326–346 (IYLWVSFVFVFLSVLEYAAVN). Over 347-443 (YLTTVQERKE…IFQNTHAIDK (97 aa)) the chain is Cytoplasmic. The chain crosses the membrane as a helical span at residues 444–464 (YSRLIFPASYIFFNLIYWSVF). Residue S465 is a topological domain, extracellular.

It belongs to the ligand-gated ion channel (TC 1.A.9) family. Gamma-aminobutyric acid receptor (TC 1.A.9.5) subfamily. GABRR2 sub-subfamily. In terms of assembly, three rho subunits (rho-1/GBRR1, rho-2/GBRR2 and rho-3/GBRR3) coassemble either to form functional homopentamers or heteropentamers. Rho-2 is unable to form a functional homopentamer. Interacts with SQSTM1.

The protein localises to the postsynaptic cell membrane. Its subcellular location is the cell membrane. It catalyses the reaction chloride(in) = chloride(out). In terms of biological role, rho subunit of the pentameric ligand-gated chloride channels responsible for mediating the effects of gamma-aminobutyric acid (GABA), the major inhibitory neurotransmitter in the brain. Rho-containing GABA-gated chloride channels are a subclass of GABA(A) receptors (GABAARs) entirely composed of rho subunits, where GABA molecules bind at the rho intersubunit interfaces. When activated by GABA, rho-GABAARs selectively allow the flow of chloride anions across the cell membrane down their electrochemical gradient. Rho-2 GABAARs may contribute to the regulation of glial development in the cerebellum by controlling extrasynaptic transmission. Rho-2 GABAARs are also involved in neuronal tonic (extrasynaptic) and phasic (synaptic) transmission in the Purkinje neurons of the cerebellum. Rho-2 GABAARs expressed in retina may play a role in retinal neurotransmission. The protein is Gamma-aminobutyric acid receptor subunit rho-2 of Homo sapiens (Human).